We begin with the raw amino-acid sequence, 1214 residues long: MDIQEQFEGYLREEVDLLNKFEDSHFKQLEVFYTNSQADHVINKDKAQFSDLPFHTTLYKEVNGKRVKLGTLLNWTKAERLDTIRHESMIKDERLRRLIDFDYSWIDYAVVLQRYLDEGNVIAPADILKFDSDFINNIKHPTEKNNFLDIKVIKECETYILMKDDNGIRDPDILRAWELDSIPDVIELDVDGEVKKFNLRKEMIKRIQDEAPVYFFASVSLCSRNLDPNISEVKLWLEYFIGSEDFFGFNGPNVVVSKSLLAAKRFEVVVNHLRKVAAFELDDESKEVMTEWLKYIMIDPVYRSYKNRGAFGNLNQHVFARTKSEGLSWSLIDIGTTNFELKPTKKLAGSYVKKFNLVDDVLVEESLKDLRNEGLYKMADITRRMIDADITPENVKKGKLNRLALSYCGYTGSHSATAMVKQFNGTKDLDPNCDPMFVDIVKDNMKVYMQEGLQKYPHGSRKINRLDILFKGGTSSASSTNEHATVNGRFRYRSELYRERDVNSSTVFKTATAGQYRVVKKISAKLKSKNANIITHPMNFINSKVSDLDVVVNAGSRLVRGTRAKRIITPNYGTIYAASLMTVLPAVRLLSSRASNMGALSTQGSLVDRAPHDVMAPQLAVTSSDDVSKVCVAKDFGQFDTSQWGQISKAHADGVRSMKVHYSMGHDALVDLDLNDASFADLLEVTAMSFEKPLKYKMNGLVCESAGVKSGELTTQTRNTTTNISHSTVALDDYNNRAYRLNLPKLELVTDNKVGDDSVEVLRVVDGSPLTPEIAKLYVSCMQDHADRNHLEISAKRTIVGNNVAEHIKIWVFKGYLALDVFLDSVTSEKNSFSNLNYLEQVNILYDMAMTLMIRYCSVQACMTQFCNDMKLLNGIRAGNYTFIPTPKIICAYGTPEICLRAPEIRSFGRYLPIDKDEYSVLNDLVASLSTNKPKMEFVSQMIEQNGNKVHSLWLDHFKRKNDVNPNGGGIHISEGLKRLMPEYCEKHLNELVYKTLDDKVIRDYTSDIIISNICKGKLSKAPKLAFYANFYLSLTNTNGVDSPYLTADEGVKNVHRVIGLSYRNTLSTSPTSNVDRILRNNPGSAPAYLTGNDILGVLSDYPYQNWRTVVELLDITEPSATAIIEVATNQMHAYLADKDLNTANLFDNTSRTYDISDRTYPKFVNITSSLSNSNRRGFQIEAMKHVIYMARRGVAVLANTHPTKIGNTVYYDY.

The RdRp catalytic domain maps to 610-805 (APHDVMAPQL…KRTIVGNNVA (196 aa)).

This sequence belongs to the reoviridae RNA-directed RNA polymerase family.

The protein localises to the virion. It catalyses the reaction RNA(n) + a ribonucleoside 5'-triphosphate = RNA(n+1) + diphosphate. RNA-directed RNA polymerase that is involved in transcription and genome replication. Following infection, it catalyzes the synthesis of fully conservative plus strands. After core assembly, which consists in recruitment of one capped plus-strand for each genomic segments and polymerase complexes, the polymerase switches mode and catalyzes the synthesis of complementary minus-strands. This is RNA-directed RNA polymerase VP1 (Segment-1) from Banna virus (BAV).